A 185-amino-acid chain; its full sequence is Phosphatidylglycerophosphatase GEP4, mitochondrial (185 aa).

The Phosphoryl acceptor signature appears at D45–C49.

This sequence belongs to the GEP4 family.

It is found in the mitochondrion inner membrane. The catalysed reaction is a 1,2-diacyl-sn-glycero-3-phospho-(1'-sn-glycero-3'-phosphate) + H2O = a 1,2-diacyl-sn-glycero-3-phospho-(1'-sn-glycerol) + phosphate. The protein operates within phospholipid metabolism; phosphatidylglycerol biosynthesis; phosphatidylglycerol from CDP-diacylglycerol: step 2/2. In terms of biological role, phosphatidylglycerophosphatase involved in the biosynthesis of cardiolipin (CL), a unique dimeric phosphoglycerolipid predominantly present in mitochondrial membranes and which has important functions for cellular energy metabolism, mitochondrial dynamics and the initiation of apoptotic pathways. Required for the stability of respiratory chain supercomplexes and for growth at elevated temperature, in presence of ethidium bromide or in absence of prohibitins. In Saccharomyces cerevisiae (strain ATCC 204508 / S288c) (Baker's yeast), this protein is Phosphatidylglycerophosphatase GEP4, mitochondrial (GEP4).